Reading from the N-terminus, the 164-residue chain is Inner membrane assembly complex subunit 17 (164 aa).

The transit peptide at 1–28 (MIKTAKISTLRLAITRNARNLSFTTLVR) directs the protein to the mitochondrion. Over 29–97 (SPEVDNSKIK…NEVPLKRFTR (69 aa)) the chain is Mitochondrial matrix. A helical transmembrane segment spans residues 98 to 118 (PLWIFILMASTFYLGAHLVWW). The Mitochondrial intermembrane segment spans residues 119–164 (KLAYEKKEVELKHKVDSLETTLKDVMKEKATGPTPCNNKKSWYKFW). A coiled-coil region spans residues 121 to 149 (AYEKKEVELKHKVDSLETTLKDVMKEKAT).

Belongs to the INA17 family. Component of the inner membrane assembly (INA) complex, composed of INA17 and INA22. Interacts with a subset of F(1)F(0)-ATP synthase subunits of the F(1)-domain and the peripheral stalk.

It is found in the mitochondrion inner membrane. In terms of biological role, component of the INA complex (INAC) that promotes the biogenesis of mitochondrial F(1)F(0)-ATP synthase. INAC facilitates the assembly of the peripheral stalk and promotes the assembly of the catalytic F(1)-domain with the membrane-embedded F(0)-domain. The polypeptide is Inner membrane assembly complex subunit 17 (Candida glabrata (strain ATCC 2001 / BCRC 20586 / JCM 3761 / NBRC 0622 / NRRL Y-65 / CBS 138) (Yeast)).